The sequence spans 313 residues: Formimidoylglutamase (313 aa).

Residues His-130, Asp-155, His-157, Asp-159, Asp-241, and Asp-243 each coordinate Mn(2+).

This sequence belongs to the arginase family. Mn(2+) is required as a cofactor.

The enzyme catalyses N-formimidoyl-L-glutamate + H2O = formamide + L-glutamate. It participates in amino-acid degradation; L-histidine degradation into L-glutamate; L-glutamate from N-formimidoyl-L-glutamate (hydrolase route): step 1/1. Its function is as follows. Catalyzes the conversion of N-formimidoyl-L-glutamate to L-glutamate and formamide. The sequence is that of Formimidoylglutamase from Salmonella paratyphi A (strain ATCC 9150 / SARB42).